A 156-amino-acid polypeptide reads, in one-letter code: Arginine repressor (156 aa).

Belongs to the ArgR family.

The protein localises to the cytoplasm. The protein operates within amino-acid biosynthesis; L-arginine biosynthesis [regulation]. Its function is as follows. Regulates arginine biosynthesis genes. The sequence is that of Arginine repressor from Shewanella putrefaciens (strain CN-32 / ATCC BAA-453).